Consider the following 91-residue polypeptide: MNKENVITLDNPVKRGEQVIEQVTLMKPSAGTLRGVSLAAVANSEVDALIKVLPRMTAPMLTEQEVAALELPDLVALAGKVVGFLSPNSVQ.

The protein belongs to the mulikevirus tail assembly protein family.

Functionally, promotes tail assembly by creating a scaffold for the tail tube proteins. Tail assembly proteins E and E' would wrap the linear tape measure protein to create a tail assembly scaffold. The polypeptide is Tail assembly protein E (Escherichia phage P2 (Bacteriophage P2)).